The following is a 509-amino-acid chain: GMP synthase [glutamine-hydrolyzing] (509 aa).

Residues 4 to 194 (LVLVVDFGGQ…LYNICGLENS (191 aa)) enclose the Glutamine amidotransferase type-1 domain. Residue C81 is the Nucleophile of the active site. Active-site residues include H168 and E170. The region spanning 195-384 (WSMASFAEEK…LGIPHHLVWR (190 aa)) is the GMPS ATP-PPase domain. 222–228 (SGGVDSS) lines the ATP pocket.

Homodimer.

It catalyses the reaction XMP + L-glutamine + ATP + H2O = GMP + L-glutamate + AMP + diphosphate + 2 H(+). The protein operates within purine metabolism; GMP biosynthesis; GMP from XMP (L-Gln route): step 1/1. In terms of biological role, catalyzes the synthesis of GMP from XMP. In Clostridium perfringens (strain 13 / Type A), this protein is GMP synthase [glutamine-hydrolyzing].